Here is a 278-residue protein sequence, read N- to C-terminus: HTH-type transcriptional activator RhaS (278 aa).

Positions 174–272 constitute an HTH araC/xylS-type domain; sequence NLLLAWLEDH…NWSPRDIRQG (99 aa). 2 DNA-binding regions (H-T-H motif) span residues 191–212 and 239–262; these read DAVA…KQQT and VTDI…RREF.

Binds DNA as a dimer.

It localises to the cytoplasm. Activates expression of the rhaBAD and rhaT operons. The polypeptide is HTH-type transcriptional activator RhaS (Shigella boydii serotype 4 (strain Sb227)).